Reading from the N-terminus, the 314-residue chain is Putative lipoprotein LppW (314 aa).

The signal sequence occupies residues 1 to 22 (MRARPLTLLTALAAVTLVVVAG). The N-palmitoyl cysteine moiety is linked to residue C23. The S-diacylglycerol cysteine moiety is linked to residue C23.

The protein localises to the cell membrane. The protein is Putative lipoprotein LppW (lppW) of Mycobacterium bovis (strain ATCC BAA-935 / AF2122/97).